A 257-amino-acid chain; its full sequence is RING1 and YY1-binding protein B (257 aa).

Disordered stretches follow at residues 1–24 and 45–257; these read MGDK…GFWD and RKGT…DESF. The RanBP2-type zinc finger occupies 19 to 48; sequence DNGFWDCSVCTFRNSAEAFKCSICDVRKGT. The span at 74 to 129 shows a compositional bias: basic and acidic residues; it reads PKKEKKEKPERPEKDRAEEERPDINPPDEHPVEQRDKDKSEKEQPEKEKKDREKEI. Positions 149-168 are enriched in polar residues; sequence HQSPPSERNSIQSGKSTTKT. Residues 169 to 178 show a composition bias toward basic residues; it reads KNSHNSRPKL. Over residues 209–233 the composition is skewed to low complexity; the sequence is TSSTSSSTVTSSASSEQQHQSSGSE.

Its subcellular location is the nucleus. It localises to the cytoplasm. Its function is as follows. May be implicated in the regulation of the transcription as a repressor of the transcriptional activity of E4TF1. This chain is RING1 and YY1-binding protein B (rybpb), found in Danio rerio (Zebrafish).